Reading from the N-terminus, the 442-residue chain is ATP-dependent protease ATPase subunit HslU (442 aa).

Residues I18 and 60–65 (GVGKTE) contribute to the ATP site. Residues 136 to 156 (LPKPKNDWDSTDSDANSNTRQ) are disordered. Residues D255, E320, and R392 each contribute to the ATP site.

It belongs to the ClpX chaperone family. HslU subfamily. As to quaternary structure, a double ring-shaped homohexamer of HslV is capped on each side by a ring-shaped HslU homohexamer. The assembly of the HslU/HslV complex is dependent on binding of ATP.

It localises to the cytoplasm. Functionally, ATPase subunit of a proteasome-like degradation complex; this subunit has chaperone activity. The binding of ATP and its subsequent hydrolysis by HslU are essential for unfolding of protein substrates subsequently hydrolyzed by HslV. HslU recognizes the N-terminal part of its protein substrates and unfolds these before they are guided to HslV for hydrolysis. In Shewanella sp. (strain MR-7), this protein is ATP-dependent protease ATPase subunit HslU.